Consider the following 555-residue polypeptide: Beta-fructofuranosidase, cell wall isozyme (555 aa).

The first 22 residues, 1-22 (MAISSIFLLSLFSLIYVIPIEA), serve as a signal peptide directing secretion. Residues 58–61 (WIND), Q77, W85, and 120–121 (WS) each bind substrate. The active site involves D61. D140 is a catalytic residue. N154 and N181 each carry an N-linked (GlcNAc...) asparagine glycan. Substrate contacts are provided by residues 186–187 (RD), E241, and D277. The N-linked (GlcNAc...) asparagine glycan is linked to N337. C435 and C481 are disulfide-bonded.

This sequence belongs to the glycosyl hydrolase 32 family.

The catalysed reaction is Hydrolysis of terminal non-reducing beta-D-fructofuranoside residues in beta-D-fructofuranosides.. The protein is Beta-fructofuranosidase, cell wall isozyme (BFRUCT1) of Pisum sativum (Garden pea).